The primary structure comprises 423 residues: Imidazolonepropionase (423 aa).

His78 and His80 together coordinate Fe(3+). 2 residues coordinate Zn(2+): His78 and His80. 4-imidazolone-5-propanoate contacts are provided by Arg87, Tyr150, and His183. N-formimidoyl-L-glutamate is bound at residue Tyr150. Residue His247 coordinates Fe(3+). His247 contacts Zn(2+). 4-imidazolone-5-propanoate is bound at residue Glu250. Residue Asp322 participates in Fe(3+) binding. Asp322 lines the Zn(2+) pocket. N-formimidoyl-L-glutamate-binding residues include Asn324 and Gly326. Ser327 lines the 4-imidazolone-5-propanoate pocket.

Belongs to the metallo-dependent hydrolases superfamily. HutI family. The cofactor is Zn(2+). Fe(3+) is required as a cofactor.

Its subcellular location is the cytoplasm. It catalyses the reaction 4-imidazolone-5-propanoate + H2O = N-formimidoyl-L-glutamate. Its pathway is amino-acid degradation; L-histidine degradation into L-glutamate; N-formimidoyl-L-glutamate from L-histidine: step 3/3. In terms of biological role, catalyzes the hydrolytic cleavage of the carbon-nitrogen bond in imidazolone-5-propanoate to yield N-formimidoyl-L-glutamate. It is the third step in the universal histidine degradation pathway. The polypeptide is Imidazolonepropionase (Bacillus cereus (strain ZK / E33L)).